Here is a 144-residue protein sequence, read N- to C-terminus: Cell division protein SepF (144 aa).

The segment covering 14 to 31 (EDDEMNEVPYTESEEQQE) has biased composition (acidic residues). Positions 14–41 (EDDEMNEVPYTESEEQQEEIPQTQKNER) are disordered.

Belongs to the SepF family. Homodimer. Interacts with FtsZ.

The protein resides in the cytoplasm. Cell division protein that is part of the divisome complex and is recruited early to the Z-ring. Probably stimulates Z-ring formation, perhaps through the cross-linking of FtsZ protofilaments. Its function overlaps with FtsA. In Lactobacillus johnsonii (strain CNCM I-12250 / La1 / NCC 533), this protein is Cell division protein SepF.